We begin with the raw amino-acid sequence, 389 residues long: tRNA N(3)-cytidine methyltransferase METTL2 (389 aa).

Residues 1 to 20 (MAASFPEGVPETEDGKRPQF) form a disordered region. 7 residues coordinate S-adenosyl-L-methionine: Trp78, Tyr82, Gly181, Asp206, Asp232, Leu233, and Ile253.

It belongs to the methyltransferase superfamily. METL family. Monomer. Interacts with DALRD3.

The protein localises to the cytoplasm. The enzyme catalyses cytidine(32) in tRNA(Thr) + S-adenosyl-L-methionine = N(3)-methylcytidine(32) in tRNA(Thr) + S-adenosyl-L-homocysteine + H(+). The catalysed reaction is cytidine(32) in tRNA(Arg)(CCU) + S-adenosyl-L-methionine = N(3)-methylcytidine(32) in tRNA(Arg)(CCU) + S-adenosyl-L-homocysteine + H(+). In terms of biological role, S-adenosyl-L-methionine-dependent methyltransferase that mediates N(3)-methylcytidine modification of residue 32 of the tRNA anticodon loop of tRNA(Thr)(UGU) and tRNA(Arg)(CCU). N(3)-methylcytidine methylation by METTL2 requires the N6-threonylcarbamoylation of tRNA (t6A37) by the EKC/KEOPS complex as prerequisite. This chain is tRNA N(3)-cytidine methyltransferase METTL2, found in Mus musculus (Mouse).